The following is a 330-amino-acid chain: PDZ and LIM domain protein 4 (330 aa).

In terms of domain architecture, PDZ spans 1 to 84; it reads MTHAVTLRGP…HLTLSVSRPE (84 aa). Disordered stretches follow at residues 104 to 154 and 219 to 239; these read DPEA…NEVT and EAGE…KPAA. Phosphoserine occurs at positions 111, 115, 118, 119, 124, and 134. A compositionally biased stretch (polar residues) spans 111–122; it reads SPATSRRSSISG. The region spanning 255–305 is the LIM zinc-binding domain; that stretch reads CTRCGHGIVGTIVKARDKLYHPECFMCSDCGLNLKQRGYFFLDERLYCENH.

In terms of assembly, homodimer. Interacts (via C-terminus only or via combined C-terminus and LIM domain, but not LIM domain only) with PTPN13 (via the second or fourth PDZ domains). Found in a complex with PTPN13 and TRIP6. Interacts (via PDZ domain) with ACTN1 and ACTN2 (via C-terminal SDL residues). Interacts (via PDZ domain) with TRIP6 (via the second LIM domain or via the third LIM domain plus C-terminus). Interacts (via LIM domain) with GRIA1 (via C-terminus); this interaction as well as the interaction with alpha-actinin is required for their colocalization in early endosomes. Interacts with PDLIM1. Forms (via LIM domain) a heterodimer with PDLIM3. Interacts directly with SRC (via kinase domain and to a lesser extent the SH2 domain). In terms of processing, phosphorylated on tyrosine residue(s). Can be dephosphorylated by PTPN13. In terms of tissue distribution, detected in several tissues, most prominent in brain and heart of adults. Expressed in embryonic fibroblasts.

It localises to the cytoplasm. The protein resides in the cytoskeleton. Its subcellular location is the cell projection. It is found in the dendritic spine. The protein localises to the early endosome membrane. It localises to the recycling endosome membrane. The protein resides in the nucleus. Its subcellular location is the perinuclear region. It is found in the lamellipodium. The protein localises to the synapse. It localises to the synaptosome. Its function is as follows. Suppresses SRC activation by recognizing and binding to active SRC and facilitating PTPN13-mediated dephosphorylation of SRC 'Tyr-419' leading to its inactivation. Inactivated SRC dissociates from this protein allowing the initiation of a new SRC inactivation cycle. Involved in reorganization of the actin cytoskeleton. In nonmuscle cells, binds to ACTN1 (alpha-actinin-1), increases the affinity of ACTN1 to F-actin (filamentous actin), and promotes formation of actin stress fibers. Involved in regulation of the synaptic AMPA receptor transport in dendritic spines of hippocampal pyramidal neurons directing the receptors toward an insertion at the postsynaptic membrane. Links endosomal surface-internalized GRIA1-containing AMPA receptors to the alpha-actinin/actin cytoskeleton. Increases AMPA receptor-mediated excitatory postsynaptic currents in neurons. The sequence is that of PDZ and LIM domain protein 4 (Pdlim4) from Rattus norvegicus (Rat).